A 1638-amino-acid chain; its full sequence is Non-structural polyprotein 1AB (1638 aa).

Residues 130 to 222 (LVHQVMEKTR…KEKENALVSV (93 aa)) are a coiled coil. Helical transmembrane passes span 220–240 (VSVG…FGLI), 379–398 (VMSY…VLAG), 407–427 (APFI…CVAV), 437–457 (FILF…LLWL), 479–499 (ALVY…GVTL), and 507–527 (ILMF…CTTI). Active-site charge relay system; for serine protease activity residues include histidine 600, aspartate 632, and serine 697. Residues 758-788 (KVSHAAILKELEELREEVQFLKKKCVTYDDY) are a coiled coil. Tyrosine 834 carries the post-translational modification O-(5'-phospho-RNA)-tyrosine. The region spanning 1381–1515 (RYFVEMDWTR…SIRKGFVEYE (135 aa)) is the RdRp catalytic domain.

Belongs to the astroviridae polyprotein 1AB family. In terms of assembly, monomer. Post-translationally, cleaved by the viral and host proteases. The protease is probably autocatalytically cleaved.

It localises to the host membrane. The catalysed reaction is RNA(n) + a ribonucleoside 5'-triphosphate = RNA(n+1) + diphosphate. Functionally, responsible for the cleavage of the polyprotein into functional products. Its function is as follows. Protein covalently attached to the 5' extremity of the genomic and subgenomic RNAs. It may serve as a primer for the replicase. This Turkey astrovirus 2 (TAstV-2) protein is Non-structural polyprotein 1AB (ORF1).